The chain runs to 169 residues: E1B protein, small T-antigen (169 aa).

Positions Gly-147–Asp-169 are disordered. Positions Glu-156–Asp-169 are enriched in basic and acidic residues.

The protein belongs to the adenoviridae E1B 19 kDa protein family.

This chain is E1B protein, small T-antigen, found in Canine adenovirus serotype 1 (strain Glaxo) (CAdV-1).